A 489-amino-acid chain; its full sequence is CUGBP Elav-like family member 1-A (489 aa).

RRM domains lie at 16–99, 108–188, and 404–482; these read IKMF…PADS, RKLF…FADT, and ANLF…LKRS. Residues 183–210 form a necessary for oligomerization and EDEN-dependent deadenylation region; the sequence is VKFADTQKDKEQKRMTQQLQQQMQQLNA.

It belongs to the CELF/BRUNOL family. In terms of assembly, oligomer. Oligomerization is required for RNA-binding and EDEN-dependent deadenylation. Post-translationally, phosphorylated during oocyte maturation and dephosphorylated following egg activation. Dephosphorylation is calcium dependent and correlates with the increase in the activity of EDEN-dependent deadenylation.

The protein resides in the nucleus. It localises to the cytoplasm. In terms of biological role, RNA-binding protein implicated in the regulation of several post-transcriptional events. May be involved in pre-mRNA alternative splicing, mRNA translation activation and stability. Mediates the rapid and sequence-specific cytoplasmic deadenylation of EDEN-containing maternal mRNAs following fertilization. Binds to AU-rich sequences (AREs) of jun mRNA. Binds to the embryonic deadenylation element (EDEN) motif localized in the 3'-UTR of maternal mRNAs. Binds to RNA containing several repeats of the consensus sequence 5'-UGU-3'. EDEN-dependent deadenylation is enhanced by the presence of an additional cis element composed of three AUU repeats. The sequence is that of CUGBP Elav-like family member 1-A (cugbp1-a) from Xenopus laevis (African clawed frog).